The chain runs to 194 residues: 7-methyl-GTP pyrophosphatase (194 aa).

The active-site Proton acceptor is the D70.

This sequence belongs to the Maf family. YceF subfamily. A divalent metal cation is required as a cofactor.

The protein localises to the cytoplasm. The enzyme catalyses N(7)-methyl-GTP + H2O = N(7)-methyl-GMP + diphosphate + H(+). Nucleoside triphosphate pyrophosphatase that hydrolyzes 7-methyl-GTP (m(7)GTP). May have a dual role in cell division arrest and in preventing the incorporation of modified nucleotides into cellular nucleic acids. This is 7-methyl-GTP pyrophosphatase from Vibrio vulnificus (strain CMCP6).